A 201-amino-acid polypeptide reads, in one-letter code: 3-isopropylmalate dehydratase small subunit (201 aa).

It belongs to the LeuD family. LeuD type 1 subfamily. In terms of assembly, heterodimer of LeuC and LeuD.

The catalysed reaction is (2R,3S)-3-isopropylmalate = (2S)-2-isopropylmalate. The protein operates within amino-acid biosynthesis; L-leucine biosynthesis; L-leucine from 3-methyl-2-oxobutanoate: step 2/4. Its function is as follows. Catalyzes the isomerization between 2-isopropylmalate and 3-isopropylmalate, via the formation of 2-isopropylmaleate. The sequence is that of 3-isopropylmalate dehydratase small subunit from Kineococcus radiotolerans (strain ATCC BAA-149 / DSM 14245 / SRS30216).